Reading from the N-terminus, the 247-residue chain is Ice-binding protein (247 aa).

A signal peptide spans 1-19; it reads MTFSILSIFVFGLISSSVA. Residue Asn219 is glycosylated (N-linked (GlcNAc...) asparagine).

Belongs to the ice-binding protein family.

It is found in the secreted. Its function is as follows. Binds ice crystals and most probably inhibits their growth in order to prevent cell damage from extracellular ice. The sequence is that of Ice-binding protein from Flammulina populicola (Enokitake mushroom).